The chain runs to 324 residues: Disintegrin-like/cysteine-rich protein MPIII-3 (324 aa).

A signal peptide spans 1–20 (MIQVLLVIICLAVFPYQVSS). A propeptide spans 21–173 (IILESGNINN…DEDPKKCEFR (153 aa)) (or 174 (in a minor form)). The 40-residue stretch at 168 to 207 (KKCEFRRAGTECRPARSECDVAEYCTGQSAECPTDVFHSN) folds into the Disintegrin; truncated domain. The interval 179–192 (CRPARSECDVAEYC) is inhibits platelet aggregation. 9 disulfides stabilise this stretch: cysteine 179-cysteine 199, cysteine 186-cysteine 218, cysteine 192-cysteine 199, cysteine 211-cysteine 223, cysteine 230-cysteine 280, cysteine 245-cysteine 287, cysteine 258-cysteine 268, cysteine 275-cysteine 312, and cysteine 306-cysteine 317. The short motif at 185–187 (ECD) is the D/ECD-tripeptide element. 2 residues coordinate Ca(2+): aspartate 187 and glutamate 190. Residues aspartate 202 and valine 203 each coordinate Ca(2+). An N-linked (GlcNAc...) asparagine glycan is attached at asparagine 237.

It belongs to the venom metalloproteinase (M12B) family. P-III subfamily. P-IIIe sub-subfamily. In terms of assembly, monomer. Is able to form a homodimer. N-glycosylated. Exists in at least six differently N-glycosylated forms. The glycans likely have a stabilizing purpose. Post-translationally, cys-199 forms a disulfide bond with Cys-192 in 90% and with Cys-179 in 10% of the protein molecules; alternative disulfide bonds may have a major effect on the conformation of the protein. In terms of tissue distribution, expressed by the venom gland (at protein level). Expressed by the venom gland.

It is found in the secreted. Its activity is regulated as follows. Activity may be regulated by the intramolecular thiol-disulfide exchange or disulfide bond switching. Its function is as follows. Abolishes platelet aggregation induced by collagen, ADP (IC(50)=292 nM) and arachidonic-acid. The inhibition of collagen-induced platelet aggregation may be due to its ability to bind collagen and block the binding site on collagen for platelets and/or to its ability to bind to the platelet alpha-2/beta-1 collagen receptor (ITGA2/ITGB1) to block its interaction with collagen and hence prevent platelet stimulation. The inhibition of ADP- or arachidonic-acid-induced platelet aggregation may be due to it acting as an antagonist of the ADP receptors or thromboxane-prostanoid receptors of the platelets, respectively. Does not interact with integrins alpha-IIb (ITGA2B) or beta-3 (ITGB3) nor platelet glycoproteins VI (GP6) or IX (GP9) in vitro, however, the detection is dependent on experimental conditions and may happen in vivo. Able to bind to platelet glycoprotein Ib alpha chain (GP1BA) receptor in vitro, although this interaction may have pathologically only limited effect in vivo as it is not able to abolish the von Willebrand factor (vWF)-dependent platelet agglutination induced by ristocetin. Does not affect blood coagulation. In Vipera ammodytes ammodytes (Western sand viper), this protein is Disintegrin-like/cysteine-rich protein MPIII-3.